Reading from the N-terminus, the 568-residue chain is Poly(A) polymerase (568 aa).

ATP is bound by residues 87 to 89 (YGS), 99 to 102 (SDID), 100 to 102 (DID), D154, K215, Y224, and 233 to 234 (GV). 3 residues coordinate Mg(2+): D100, D102, and D154. Phosphoserine occurs at positions 452 and 550. The interval 525–568 (NEKRPSKKSKRKNLDARHETVKRSKSDAASGDNINGTTAAVDVN) is disordered. Over residues 536-550 (KNLDARHETVKRSKS) the composition is skewed to basic and acidic residues.

Belongs to the poly(A) polymerase family. Component of the cleavage and polyadenylation factor (CPF) complex, which is composed of PTI1, SYC1, SSU72, GLC7, MPE1, REF2, PFS2, PTA1, YSH1/BRR5, SWD2, CFT2/YDH1, YTH1, CFT1/YHH1, FIP1 and PAP1. Interacts with FIR1 and RRP6. Mg(2+) serves as cofactor. It depends on Mn(2+) as a cofactor.

The protein resides in the nucleus. The enzyme catalyses RNA(n) + ATP = RNA(n)-3'-adenine ribonucleotide + diphosphate. Polymerase component of the cleavage and polyadenylation factor (CPF) complex, which plays a key role in polyadenylation-dependent pre-mRNA 3'-end formation and cooperates with cleavage factors including the CFIA complex and NAB4/CFIB. The polypeptide is Poly(A) polymerase (PAP1) (Saccharomyces cerevisiae (strain ATCC 204508 / S288c) (Baker's yeast)).